The chain runs to 195 residues: Imidazoleglycerol-phosphate dehydratase (195 aa).

It belongs to the imidazoleglycerol-phosphate dehydratase family.

Its subcellular location is the cytoplasm. The enzyme catalyses D-erythro-1-(imidazol-4-yl)glycerol 3-phosphate = 3-(imidazol-4-yl)-2-oxopropyl phosphate + H2O. Its pathway is amino-acid biosynthesis; L-histidine biosynthesis; L-histidine from 5-phospho-alpha-D-ribose 1-diphosphate: step 6/9. The protein is Imidazoleglycerol-phosphate dehydratase of Koribacter versatilis (strain Ellin345).